Consider the following 149-residue polypeptide: D-aminoacyl-tRNA deacylase (149 aa).

The short motif at 137-138 (GP) is the Gly-cisPro motif, important for rejection of L-amino acids element.

This sequence belongs to the DTD family. Homodimer.

The protein resides in the cytoplasm. It catalyses the reaction glycyl-tRNA(Ala) + H2O = tRNA(Ala) + glycine + H(+). The catalysed reaction is a D-aminoacyl-tRNA + H2O = a tRNA + a D-alpha-amino acid + H(+). Functionally, an aminoacyl-tRNA editing enzyme that deacylates mischarged D-aminoacyl-tRNAs. Also deacylates mischarged glycyl-tRNA(Ala), protecting cells against glycine mischarging by AlaRS. Acts via tRNA-based rather than protein-based catalysis; rejects L-amino acids rather than detecting D-amino acids in the active site. By recycling D-aminoacyl-tRNA to D-amino acids and free tRNA molecules, this enzyme counteracts the toxicity associated with the formation of D-aminoacyl-tRNA entities in vivo and helps enforce protein L-homochirality. The chain is D-aminoacyl-tRNA deacylase from Clostridium kluyveri (strain ATCC 8527 / DSM 555 / NBRC 12016 / NCIMB 10680 / K1).